The chain runs to 198 residues: Pyridoxal 5'-phosphate synthase subunit PdxT (198 aa).

L-glutamine is bound at residue 49 to 51 (GES). C81 (nucleophile) is an active-site residue. Residues R113 and 141-142 (IR) contribute to the L-glutamine site. Catalysis depends on charge relay system residues H177 and E179.

The protein belongs to the glutaminase PdxT/SNO family. In terms of assembly, in the presence of PdxS, forms a dodecamer of heterodimers. Only shows activity in the heterodimer.

It carries out the reaction aldehydo-D-ribose 5-phosphate + D-glyceraldehyde 3-phosphate + L-glutamine = pyridoxal 5'-phosphate + L-glutamate + phosphate + 3 H2O + H(+). The enzyme catalyses L-glutamine + H2O = L-glutamate + NH4(+). The protein operates within cofactor biosynthesis; pyridoxal 5'-phosphate biosynthesis. Catalyzes the hydrolysis of glutamine to glutamate and ammonia as part of the biosynthesis of pyridoxal 5'-phosphate. The resulting ammonia molecule is channeled to the active site of PdxS. This is Pyridoxal 5'-phosphate synthase subunit PdxT from Mycobacterium tuberculosis (strain ATCC 25177 / H37Ra).